A 208-amino-acid polypeptide reads, in one-letter code: Protein disulfide-isomerase A3 (208 aa).

The 44-residue stretch at 1 to 44 (RLAPEYEAAATRYGVSGYPTLKDGEEAGAYDGPRTADGIVSHLK) folds into the Thioredoxin 1 domain. Lys44 carries the post-translational modification N6-succinyllysine. Lys49 bears the N6-acetyllysine mark. The residue at position 133 (Thr133) is a Phosphothreonine. The Thioredoxin 2 domain maps to 151 to 208 (SRFLQDYFDGNLKRYLKSEPIPETNDGPVKMDATANDVPSPYEVKGFPTIYFSPANKK). An N6-acetyllysine modification is found at Lys163.

It belongs to the protein disulfide isomerase family. Part of the major histocompatibility complex class I (MHC I) peptide loading complex composed of TAP1, TAP2, B2M, MHC heavy chain, TAPBP, PDIA3, and CALR. Interacts with ERP27 and CANX. Interacts with SERPINA2 and SERPINA1. Interacts with ATP2A2. Within the major histocompatibility complex class I (MHC I) peptide loading complex forms reversible disulfide-linked heterodimers with TAPBP as part of its protein folding chaperone activity. This is essential to assist the dynamic assembly of the MHC I complex with high affinity antigens in the endoplasmic reticulum. In terms of processing, phosphorylated. As to expression, in the caput epididymal spermatozoa, detected in the mid-peice and at low levels in the principal piece. In the cauda epididymal spermatozoa, detected at very low levels in the principal piece and not in the mid-piece (at protein level).

It localises to the endoplasmic reticulum. Its subcellular location is the endoplasmic reticulum lumen. It is found in the melanosome. It carries out the reaction Catalyzes the rearrangement of -S-S- bonds in proteins.. Functionally, protein disulfide isomerase that catalyzes the formation, isomerization, and reduction or oxidation of disulfide bonds in client proteins and functions as a protein folding chaperone. Core component of the major histocompatibility complex class I (MHC I) peptide loading complex where it functions as an essential folding chaperone for TAPBP. Through TAPBP, assists the dynamic assembly of the MHC I complex with high affinity antigens in the endoplasmic reticulum. Therefore, plays a crucial role in the presentation of antigens to cytotoxic T cells in adaptive immunity. The chain is Protein disulfide-isomerase A3 from Mesocricetus auratus (Golden hamster).